Consider the following 372-residue polypeptide: MAFKQLFAAISLALSLSAANAAAVIEKRATCSNGKTVGDASCCAWFDVLDDIQQNLFHGGQCGAEAHESIRLVFHDSIAISPAMEAQGKFGGGGADGSIMIFDDIETAFHPNIGLDEIVKLQKPFVQKHGVTPGAFIAFAGAVALSNCPGAPQMNFFTGRAPATQPAPDGLVPEPFHTVDQIINRVNDAGEFDELELVWMLSAHSVAAVNDVDPTVQGLPFDSTPGIFDSQFFVETQLRGTAFPGSGGNQGEVESPLPGEIRIQSDHTIARDSRTACEWQSFVNNQSKLVDDFQFIFLALTQLGQDPNAMTDCSDVIPQSKPIPGNLPFSFFPAGKTIKDVEQACAETPFPTLTTLPGPETSVQRIPPPPGA.

The N-terminal stretch at 1-21 (MAFKQLFAAISLALSLSAANA) is a signal peptide. The propeptide occupies 22-28 (AAVIEKR). 4 cysteine pairs are disulfide-bonded: Cys31-Cys43, Cys42-Cys313, Cys62-Cys148, and Cys277-Cys345. His75 acts as the Proton acceptor in catalysis. Residues Asp76, Gly94, Asp96, and Ser98 each coordinate Ca(2+). Heme b is bound at residue His204. The Ca(2+) site is built by Ser205, Asp222, Thr224, Ile227, and Asp229. Asn285 is a glycosylation site (N-linked (GlcNAc...) asparagine). A compositionally biased stretch (low complexity) spans 350–361 (FPTLTTLPGPET). The interval 350-372 (FPTLTTLPGPETSVQRIPPPPGA) is disordered.

This sequence belongs to the peroxidase family. Ligninase subfamily. It depends on heme b as a cofactor. Ca(2+) serves as cofactor.

It catalyses the reaction 1-(3,4-dimethoxyphenyl)-2-(2-methoxyphenoxy)propane-1,3-diol + H2O2 = 3,4-dimethoxybenzaldehyde + guaiacol + glycolaldehyde + H2O. The enzyme catalyses 2 (3,4-dimethoxyphenyl)methanol + H2O2 = 2 (3,4-dimethoxyphenyl)methanol radical + 2 H2O. It participates in secondary metabolite metabolism; lignin degradation. Its function is as follows. Depolymerization of lignin. Catalyzes the C(alpha)-C(beta) cleavage of the propyl side chains of lignin. The sequence is that of Ligninase B (LIPB) from Phanerodontia chrysosporium (White-rot fungus).